We begin with the raw amino-acid sequence, 367 residues long: WAT1-related protein At3g28050 (367 aa).

10 consecutive transmembrane segments (helical) span residues valine 10–phenylalanine 30, phenylalanine 40–phenylalanine 60, phenylalanine 73–glycine 93, threonine 103–phenylalanine 123, threonine 142–alanine 162, tryptophan 179–valine 199, phenylalanine 211–phenylalanine 231, isoleucine 246–histidine 266, leucine 276–phenylalanine 296, and leucine 301–tryptophan 321. EamA domains are found at residues glycine 25–threonine 153 and leucine 195–valine 319. Residues histidine 338–valine 367 form a disordered region.

This sequence belongs to the drug/metabolite transporter (DMT) superfamily. Plant drug/metabolite exporter (P-DME) (TC 2.A.7.4) family.

It localises to the membrane. The chain is WAT1-related protein At3g28050 from Arabidopsis thaliana (Mouse-ear cress).